The sequence spans 161 residues: D-amino-acid N-acetyltransferase HPA3 (161 aa).

S2 is subject to N-acetylserine. The N-acetyltransferase domain occupies 14-161; it reads IVVKAIEPKD…DKVLYKRNGY (148 aa). Residue 98–111 participates in acetyl-CoA binding; that stretch reads LYVTERARVKGVGR.

The protein belongs to the acetyltransferase family. GNAT subfamily. In terms of processing, autoacetylates in an intermolecular reaction.

The protein resides in the cytoplasm. Its subcellular location is the nucleus. The catalysed reaction is a D-alpha-amino acid + acetyl-CoA = an N-acetyl-D-amino acid + CoA + H(+). In terms of biological role, N-acetyltransferase that acts on a wide range of D-amino acids. Catalyzes the N-acetylation through an ordered bi-bi mechanism, in which acetyl-CoA is the first substrate to be bound and CoA is the last product to be liberated. D-amino acids are toxic for the cell and their N-acetylation, preceding removal from cells, plays an important role in detoxification of D-amino acids. In vitro, capable of acetylating histone H4 at 'Lys-8' and polyamines like putrescine, spermidine and spermine. The polypeptide is D-amino-acid N-acetyltransferase HPA3 (Saccharomyces cerevisiae (strain ATCC 204508 / S288c) (Baker's yeast)).